The primary structure comprises 430 residues: UDP-N-acetylmuramoylalanine--D-glutamate ligase (430 aa).

Residue 105 to 111 participates in ATP binding; that stretch reads GSNGKTT.

Belongs to the MurCDEF family.

It localises to the cytoplasm. It catalyses the reaction UDP-N-acetyl-alpha-D-muramoyl-L-alanine + D-glutamate + ATP = UDP-N-acetyl-alpha-D-muramoyl-L-alanyl-D-glutamate + ADP + phosphate + H(+). It functions in the pathway cell wall biogenesis; peptidoglycan biosynthesis. Functionally, cell wall formation. Catalyzes the addition of glutamate to the nucleotide precursor UDP-N-acetylmuramoyl-L-alanine (UMA). This is UDP-N-acetylmuramoylalanine--D-glutamate ligase from Pseudothermotoga lettingae (strain ATCC BAA-301 / DSM 14385 / NBRC 107922 / TMO) (Thermotoga lettingae).